A 233-amino-acid chain; its full sequence is Phosphatidylserine decarboxylase proenzyme (233 aa).

The active-site Schiff-base intermediate with substrate; via pyruvic acid is S190. Residue S190 is modified to Pyruvic acid (Ser); by autocatalysis.

This sequence belongs to the phosphatidylserine decarboxylase family. PSD-A subfamily. Heterodimer of a large membrane-associated beta subunit and a small pyruvoyl-containing alpha subunit. Requires pyruvate as cofactor. Post-translationally, is synthesized initially as an inactive proenzyme. Formation of the active enzyme involves a self-maturation process in which the active site pyruvoyl group is generated from an internal serine residue via an autocatalytic post-translational modification. Two non-identical subunits are generated from the proenzyme in this reaction, and the pyruvate is formed at the N-terminus of the alpha chain, which is derived from the carboxyl end of the proenzyme. The post-translation cleavage follows an unusual pathway, termed non-hydrolytic serinolysis, in which the side chain hydroxyl group of the serine supplies its oxygen atom to form the C-terminus of the beta chain, while the remainder of the serine residue undergoes an oxidative deamination to produce ammonia and the pyruvoyl prosthetic group on the alpha chain.

Its subcellular location is the cell membrane. It carries out the reaction a 1,2-diacyl-sn-glycero-3-phospho-L-serine + H(+) = a 1,2-diacyl-sn-glycero-3-phosphoethanolamine + CO2. Its pathway is phospholipid metabolism; phosphatidylethanolamine biosynthesis; phosphatidylethanolamine from CDP-diacylglycerol: step 2/2. Functionally, catalyzes the formation of phosphatidylethanolamine (PtdEtn) from phosphatidylserine (PtdSer). This chain is Phosphatidylserine decarboxylase proenzyme, found in Xanthobacter autotrophicus (strain ATCC BAA-1158 / Py2).